We begin with the raw amino-acid sequence, 356 residues long: Butyrate kinase (356 aa).

Belongs to the acetokinase family.

The protein resides in the cytoplasm. It carries out the reaction butanoate + ATP = butanoyl phosphate + ADP. Its pathway is lipid metabolism; butanoate metabolism. In terms of biological role, catalyzes the conversion of butyryl-CoA through butyryl phosphate to butyrate. This chain is Butyrate kinase (buk), found in Clostridium perfringens (strain 13 / Type A).